The primary structure comprises 42 residues: Potassium channel toxin gamma-KTx 1.8 (42 aa).

4 disulfides stabilise this stretch: C5–C23, C11–C34, C20–C39, and C24–C41.

The protein belongs to the ergtoxin family. Gamma-KTx 1 subfamily. As to expression, expressed by the venom gland.

The protein localises to the secreted. Functionally, blocks in a reversible manner human and rat Kv11.1/KCNH2/ERG1 potassium channels. Also completely and irreversibly blocks rat Kv11.2/KCNH6/ERG2 and human Kv11.3/KCNH7/ERG3 channels. Also weakly inhibits Kir2.1/KCNJ2 and Kv1.2/KCNA2 potassium channels. The protein is Potassium channel toxin gamma-KTx 1.8 of Centruroides elegans (Bark scorpion).